Here is a 961-residue protein sequence, read N- to C-terminus: DNA replication licensing factor MCM2 (961 aa).

The span at 1–17 shows a compositional bias: polar residues; the sequence is MDDSENNAPSTPGSPGF. Disordered regions lie at residues 1-81 and 120-220; these read MDDS…FNDN and AEAE…EEDE. Over residues 39–78 the composition is skewed to acidic residues; the sequence is SDDDDDDVVGAEEAEVDPNVLPEDDGVVAAEEEEDGEDLF. Composition is skewed to basic and acidic residues over residues 120–146 and 166–176; these read AEAE…LHDQ and PPREPRTPRSD. Over residues 205–220 the composition is skewed to acidic residues; it reads QTDDDPYEDEFDEEDE. The C4-type zinc-finger motif lies at 380–406; it reads CSKCGTVLGPFFQNSYTEVKVGSCPEC. Residues 524–730 form the MCM domain; it reads IGERIVKSIA…FTDEMLARFV (207 aa). Position 574-581 (574-581) interacts with ATP; that stretch reads GDPGTAKS. The Arginine finger motif lies at 706–709; that stretch reads SRFD.

It belongs to the MCM family. As to quaternary structure, component of the minichromosome maintenance (MCM) complex, a heterotetramer composed of MCM2, MCM3, MCM4, MCM5, MCM6 and MCM7. Interacts with CSN5. Widely expressed, with higher expression in developing tissues.

The protein resides in the nucleus. The enzyme catalyses ATP + H2O = ADP + phosphate + H(+). Functionally, probable component of the MCM2-7 complex (MCM complex) that may function as a DNA helicase and which is essential to undergo a single round of replication initiation and elongation per cell cycle in eukaryotic cells. Can complement the fission yeast mcm2 mutant. This chain is DNA replication licensing factor MCM2, found in Oryza sativa subsp. japonica (Rice).